A 246-amino-acid polypeptide reads, in one-letter code: Small ribosomal subunit protein uS2 (246 aa).

Belongs to the universal ribosomal protein uS2 family.

In Stutzerimonas stutzeri (strain A1501) (Pseudomonas stutzeri), this protein is Small ribosomal subunit protein uS2.